A 75-amino-acid chain; its full sequence is Translational regulator CsrA (75 aa).

This sequence belongs to the CsrA/RsmA family. As to quaternary structure, homodimer; the beta-strands of each monomer intercalate to form a hydrophobic core, while the alpha-helices form wings that extend away from the core.

It localises to the cytoplasm. Functionally, a translational regulator that binds mRNA to regulate translation initiation and/or mRNA stability. Usually binds in the 5'-UTR at or near the Shine-Dalgarno sequence preventing ribosome-binding, thus repressing translation. Its main target seems to be the major flagellin gene, while its function is anatagonized by FliW. The chain is Translational regulator CsrA from Thermosipho melanesiensis (strain DSM 12029 / CIP 104789 / BI429).